The sequence spans 288 residues: Thymidylate synthase (288 aa).

A dUMP-binding site is contributed by R21. H51 contributes to the (6R)-5,10-methylene-5,6,7,8-tetrahydrofolate binding site. Residue 150–151 participates in dUMP binding; the sequence is RR. Residue C170 is the Nucleophile of the active site. DUMP contacts are provided by residues 190–193, N201, and 231–233; these read RSGD and HIY. D193 is a binding site for (6R)-5,10-methylene-5,6,7,8-tetrahydrofolate. A287 contributes to the (6R)-5,10-methylene-5,6,7,8-tetrahydrofolate binding site.

Belongs to the thymidylate synthase family. Bacterial-type ThyA subfamily. In terms of assembly, homodimer.

The protein resides in the cytoplasm. The enzyme catalyses dUMP + (6R)-5,10-methylene-5,6,7,8-tetrahydrofolate = 7,8-dihydrofolate + dTMP. The protein operates within pyrimidine metabolism; dTTP biosynthesis. Its function is as follows. Catalyzes the reductive methylation of 2'-deoxyuridine-5'-monophosphate (dUMP) to 2'-deoxythymidine-5'-monophosphate (dTMP) while utilizing 5,10-methylenetetrahydrofolate (mTHF) as the methyl donor and reductant in the reaction, yielding dihydrofolate (DHF) as a by-product. This enzymatic reaction provides an intracellular de novo source of dTMP, an essential precursor for DNA biosynthesis. This Mycoplasma mobile (strain ATCC 43663 / 163K / NCTC 11711) (Mesomycoplasma mobile) protein is Thymidylate synthase.